We begin with the raw amino-acid sequence, 115 residues long: Ig heavy chain V-III region J606 (115 aa).

One can recognise an Ig-like domain in the interval 1–114 (EVKLEESGGG…WGQGTLVTVS (114 aa)). Cys22 and Cys98 are disulfide-bonded.

This Mus musculus (Mouse) protein is Ig heavy chain V-III region J606.